The sequence spans 987 residues: VPS35 endosomal protein sorting factor-like (987 aa).

Residues Met1–Pro23 are compositionally biased toward low complexity. The tract at residues Met1–Lys115 is disordered. Residues Asn43–Lys63 show a composition bias toward basic and acidic residues. Over residues Gln66–Pro111 the composition is skewed to low complexity.

This sequence belongs to the VPS35L family. As to quaternary structure, component of the heterotrimeric retriever complex.

Its subcellular location is the endosome. Functionally, acts as a component of the retriever complex. The retriever complex is a heterotrimeric complex related to retromer cargo-selective complex (CSC) and essential for retromer-independent retrieval and recycling of numerous cargos. The sequence is that of VPS35 endosomal protein sorting factor-like from Dictyostelium discoideum (Social amoeba).